The sequence spans 111 residues: Dynein light chain Tctex-type (111 aa).

This sequence belongs to the dynein light chain Tctex-type family. The cytoplasmic dynein complex consists of two catalytic heavy chains (HCs) and a number of non-catalytic subunits presented by intermediate chains (ICs), light intermediate chains (LICs) and light chains (LCs).

The protein resides in the cytoplasm. It localises to the cytoskeleton. Functionally, acts as one of several non-catalytic accessory components of the cytoplasmic dynein complex that are thought to be involved in linking dynein to cargos and to adapter proteins that regulate dynein function. Cytoplasmic dynein acts as a motor for the intracellular retrograde motility of vesicles and organelles along microtubules. Required for spermatid differentiation. Is not required for polarized transport in rhabdomere development and appears to be a non-essential component of the cytoplasmic dynein complex. In Drosophila melanogaster (Fruit fly), this protein is Dynein light chain Tctex-type (Dlc90F).